A 351-amino-acid polypeptide reads, in one-letter code: Anaerobic nitrite reductase Glb1-2 (351 aa).

Globin domains follow at residues 13-162 (DFTE…VEMK) and 184-333 (CFTE…AEMK). Heme b-binding residues include serine 56, lysine 70, histidine 74, lysine 104, threonine 108, histidine 109, serine 227, lysine 241, histidine 245, lysine 275, threonine 279, and histidine 280. Residues 331 to 351 (EMKKTDHDHQTNVEDKSKPSS) are disordered.

Belongs to the plant globin family. Monomer. It depends on heme b as a cofactor. As to expression, predominantly expressed in nodules and roots, and, to a lesser extent, in leaves, at low levels in pods, but barely in stems, petioles, buds and flowers. Mainly expressed in nodules and roots at low levels, and barely in leaves. In terms of tissue distribution, expressed at very low levels in nodules, roots and pods.

The protein localises to the cytoplasm. Its subcellular location is the nucleus. It catalyses the reaction Fe(III)-heme b-[protein] + nitric oxide + H2O = Fe(II)-heme b-[protein] + nitrite + 2 H(+). In terms of biological role, phytoglobin that regulates the fine tuning of nitric oxide (NO) concentration in the cytosol in response to sudden changes in O(2) availability, and performs both symbiotic and nonsymbiotic functions. Exhibits NO dioxygenase activity in the presence of O(2) but nitrite reductase (NiR) activity in the absence of O(2) (e.g. during flooding or in waterlogged soil). May not function as an oxygen storage or transport protein. Extremely reactive toward the physiological ligands O(2), nitric oxide (NO), and nitrite with a very high affinity for O(2) through an hexacoordinate heme iron because of a very low dissociation constant. Functionally, very high affinity for O(2) through two hexacoordinate heme irons. Extremely reactive toward the physiological ligands O(2), nitric oxide (NO), and nitrite. Very high affinity for O(2) through a single hexacoordinate heme iron. Extremely reactive toward the physiological ligands O(2), nitric oxide (NO), and nitrite. The sequence is that of Anaerobic nitrite reductase Glb1-2 from Medicago truncatula (Barrel medic).